The primary structure comprises 199 residues: MTKVLVLYYSAYGHIEAMANAVAEGAREAGASVDIKRVPELVPAEVAKAAHFKLDQAAPVAKVEDLANYDAIIVGTGTRFGRMSSQMANFLDQAGGLWAKGALHGKVGGAFTSTATQHGGQEMTLFSIITNLLHFGMVVVGLNYGFAGQMGVKEVTGGAPYGATTITDGDGSRLPSENELNGARYQGRTIAETAKKLHG.

The region spanning valine 4–isoleucine 190 is the Flavodoxin-like domain. FMN-binding positions include serine 10 to isoleucine 15 and threonine 78 to phenylalanine 80. Tyrosine 12 lines the NAD(+) pocket. Residue tryptophan 98 participates in substrate binding. FMN is bound by residues serine 113–glycine 119 and histidine 134.

It belongs to the WrbA family. FMN is required as a cofactor.

The catalysed reaction is a quinone + NADH + H(+) = a quinol + NAD(+). It catalyses the reaction a quinone + NADPH + H(+) = a quinol + NADP(+). In Afipia carboxidovorans (strain ATCC 49405 / DSM 1227 / KCTC 32145 / OM5) (Oligotropha carboxidovorans), this protein is NAD(P)H dehydrogenase (quinone).